The primary structure comprises 101 residues: Anti-sigma factor RshA (101 aa).

An inhibits SigH sigma factor activity region spans residues 9–15; sequence DAHADHD. Cys-23 provides a ligand contact to iron-sulfur cluster. Inhibits SigH sigma factor activity regions lie at residues 28-34 and 38-44; these read AEVWTLL and CTPETRE. Positions 49, 53, and 56 each coordinate iron-sulfur cluster. A Phosphothreonine modification is found at Thr-94.

The protein belongs to the zinc-associated anti-sigma factor (ZAS) superfamily. In terms of assembly, interacts with cognate sigma factor SigH under reducing conditions. Binding inhibits the interaction of SigH with the RNA polymerase catalytic core. It depends on iron-sulfur cluster as a cofactor. Phosphorylated, probably by PknB. Phosphorylation decreases interaction with SigH, leading to increased SigH-mediated transcription.

In terms of biological role, an redox-regulated anti-sigma factor for extracytoplasmic function (ECF) sigma factor SigH. ECF sigma factors are held in an inactive form by a cognate anti-sigma factor. RshA and some peptides derived from it inhibit the sigma factor activity of SigH. Probably releases SigH during oxidative stress. The polypeptide is Anti-sigma factor RshA (rshA) (Mycobacterium tuberculosis (strain CDC 1551 / Oshkosh)).